The chain runs to 163 residues: Nucleotide-binding protein Noca_0564 (163 aa).

The protein belongs to the YajQ family.

In terms of biological role, nucleotide-binding protein. This Nocardioides sp. (strain ATCC BAA-499 / JS614) protein is Nucleotide-binding protein Noca_0564.